Consider the following 59-residue polypeptide: Large ribosomal subunit protein bL32 (59 aa).

Positions 1–21 (MAVPKKKSSKSKGRSRAAHHA) are disordered.

It belongs to the bacterial ribosomal protein bL32 family.

The polypeptide is Large ribosomal subunit protein bL32 (Magnetococcus marinus (strain ATCC BAA-1437 / JCM 17883 / MC-1)).